We begin with the raw amino-acid sequence, 356 residues long: 5-amino-6-(D-ribitylamino)uracil--L-tyrosine 4-hydroxyphenyl transferase (356 aa).

The Radical SAM core domain maps to 47 to 281; sequence VTYIVNRNIN…AIARILLNTH (235 aa). [4Fe-4S] cluster contacts are provided by Cys-61, Cys-65, and Cys-68.

The protein belongs to the radical SAM superfamily. CofH family. In terms of assembly, consists of two subunits, CofG and CofH. Requires [4Fe-4S] cluster as cofactor.

It catalyses the reaction 5-amino-6-(D-ribitylamino)uracil + L-tyrosine + S-adenosyl-L-methionine = 5-amino-5-(4-hydroxybenzyl)-6-(D-ribitylimino)-5,6-dihydrouracil + 2-iminoacetate + 5'-deoxyadenosine + L-methionine + H(+). It participates in cofactor biosynthesis; coenzyme F0 biosynthesis. In terms of biological role, catalyzes the radical-mediated synthesis of 5-amino-5-(4-hydroxybenzyl)-6-(D-ribitylimino)-5,6-dihydrouracil from 5-amino-6-(D-ribitylamino)uracil and L-tyrosine. This is 5-amino-6-(D-ribitylamino)uracil--L-tyrosine 4-hydroxyphenyl transferase from Methanococcoides burtonii (strain DSM 6242 / NBRC 107633 / OCM 468 / ACE-M).